We begin with the raw amino-acid sequence, 70 residues long: Large ribosomal subunit protein bL31 (70 aa).

Zn(2+) is bound by residues cysteine 16, cysteine 18, cysteine 37, and cysteine 40.

The protein belongs to the bacterial ribosomal protein bL31 family. Type A subfamily. Part of the 50S ribosomal subunit. Requires Zn(2+) as cofactor.

Functionally, binds the 23S rRNA. In Saccharophagus degradans (strain 2-40 / ATCC 43961 / DSM 17024), this protein is Large ribosomal subunit protein bL31.